A 954-amino-acid polypeptide reads, in one-letter code: Kinesin-like protein KIN-14A (954 aa).

Residues 24-142 enclose the Calponin-homology (CH) domain; the sequence is ALRRHQAATW…CVISLKSYHE (119 aa). Residues 242–293 adopt a coiled-coil conformation; that stretch reads LSRQLEKEQSSNSQVENRRRLLQAQESELLELKSMFQEVKIDFRTLKTQFQD. The region spanning 332–651 is the Kinesin motor domain; sequence NIRVFCRIRP…LKFAQRASCV (320 aa). 413–420 is a binding site for ATP; the sequence is GQTGSGKT. Residues 656-692 adopt a coiled-coil conformation; that stretch reads AHANKESNEIRELKEQVENLKRALAAKELEKSSFKLK. The segment covering 697–709 has biased composition (basic and acidic residues); it reads VRERAKQVPERTP. Disordered regions lie at residues 697-743, 824-858, and 882-954; these read VRER…TKLN, NLEV…RKSI, and PAKI…KRWL. 2 stretches are compositionally biased toward polar residues: residues 831–849 and 886–898; these read DEPS…NATK and ANST…SSIT.

This sequence belongs to the TRAFAC class myosin-kinesin ATPase superfamily. Kinesin family. KIN-14 subfamily.

In Oryza sativa subsp. japonica (Rice), this protein is Kinesin-like protein KIN-14A.